We begin with the raw amino-acid sequence, 183 residues long: NADH-quinone oxidoreductase subunit B 2 (183 aa).

Positions 47, 48, 113, and 142 each coordinate [4Fe-4S] cluster.

Belongs to the complex I 20 kDa subunit family. In terms of assembly, NDH-1 is composed of 14 different subunits. Subunits NuoB, C, D, E, F, and G constitute the peripheral sector of the complex. Requires [4Fe-4S] cluster as cofactor.

The protein resides in the cell inner membrane. It catalyses the reaction a quinone + NADH + 5 H(+)(in) = a quinol + NAD(+) + 4 H(+)(out). Functionally, NDH-1 shuttles electrons from NADH, via FMN and iron-sulfur (Fe-S) centers, to quinones in the respiratory chain. The immediate electron acceptor for the enzyme in this species is believed to be ubiquinone. Couples the redox reaction to proton translocation (for every two electrons transferred, four hydrogen ions are translocated across the cytoplasmic membrane), and thus conserves the redox energy in a proton gradient. The chain is NADH-quinone oxidoreductase subunit B 2 from Anaeromyxobacter sp. (strain Fw109-5).